Consider the following 599-residue polypeptide: Elongation factor 4 (599 aa).

The 183-residue stretch at 2–184 folds into the tr-type G domain; that stretch reads KNIRNFSIIA…RLVRDIPPPQ (183 aa). GTP is bound by residues 14 to 19 and 131 to 134; these read DHGKST and NKID.

It belongs to the TRAFAC class translation factor GTPase superfamily. Classic translation factor GTPase family. LepA subfamily.

It is found in the cell inner membrane. The catalysed reaction is GTP + H2O = GDP + phosphate + H(+). Required for accurate and efficient protein synthesis under certain stress conditions. May act as a fidelity factor of the translation reaction, by catalyzing a one-codon backward translocation of tRNAs on improperly translocated ribosomes. Back-translocation proceeds from a post-translocation (POST) complex to a pre-translocation (PRE) complex, thus giving elongation factor G a second chance to translocate the tRNAs correctly. Binds to ribosomes in a GTP-dependent manner. The sequence is that of Elongation factor 4 from Salmonella arizonae (strain ATCC BAA-731 / CDC346-86 / RSK2980).